A 431-amino-acid chain; its full sequence is Mediator of RNA polymerase II transcription subunit 2 (431 aa).

At Ser-6 the chain carries Phosphoserine. The span at 105–140 (GKEKEKEREEAEKKRAEQENMRKVREQEELKKRQEL) shows a compositional bias: basic and acidic residues. The interval 105 to 178 (GKEKEKEREE…ANTTDANGSK (74 aa)) is disordered. The segment covering 143-152 (ASQQQQLQQN) has biased composition (low complexity). A compositionally biased stretch (polar residues) spans 162 to 178 (NFSTTAPANTTDANGSK). Position 208 is a phosphoserine; by CDK8 (Ser-208). A disordered region spans residues 284–399 (NNINSTKNGK…GDNPPPADNG (116 aa)). Residues 304–313 (NGDEKNKNNN) are compositionally biased toward basic and acidic residues. Residues 318–365 (NNNNSSEKNNNNNNNNNNNNDDNGNNNNNNSGNDNNNTTNNDSNNKNN) show a composition bias toward low complexity. Polar residues predominate over residues 366-387 (SITTGNDNENIVNNDLPTTVVS).

Belongs to the mediator complex subunit 2 family. Component of the Mediator complex, which is composed of at least 21 subunits that form three structurally distinct submodules. The Mediator head module contains MED6, MED8, MED11, SRB4/MED17, SRB5/MED18, ROX3/MED19, SRB2/MED20 and SRB6/MED22, the middle module contains MED1, MED4, NUT1/MED5, MED7, CSE2/MED9, NUT2/MED10, SRB7/MED21 and SOH1/MED31, and the tail module contains MED2, PGD1/MED3, RGR1/MED14, GAL11/MED15 and SIN4/MED16. The head and the middle modules interact directly with RNA polymerase II, whereas the elongated tail module interacts with gene-specific regulatory proteins.

It localises to the nucleus. In terms of biological role, component of the Mediator complex, a coactivator involved in the regulated transcription of nearly all RNA polymerase II-dependent genes. Mediator functions as a bridge to convey information from gene-specific regulatory proteins to the basal RNA polymerase II transcription machinery. The Mediator complex, having a compact conformation in its free form, is recruited to promoters by direct interactions with regulatory proteins and serves for the assembly of a functional preinitiation complex with RNA polymerase II and the general transcription factors. The Mediator complex unfolds to an extended conformation and partially surrounds RNA polymerase II, specifically interacting with the unphosphorylated form of the C-terminal domain (CTD) of RNA polymerase II. The Mediator complex dissociates from the RNA polymerase II holoenzyme and stays at the promoter when transcriptional elongation begins. The polypeptide is Mediator of RNA polymerase II transcription subunit 2 (MED2) (Saccharomyces cerevisiae (strain ATCC 204508 / S288c) (Baker's yeast)).